The sequence spans 70 residues: Large ribosomal subunit protein eL43 (70 aa).

Positions 36, 39, 55, and 58 each coordinate Zn(2+). Residues 36-58 (CPYCKTTGKVIRLASGIWYCKKC) form a C4-type zinc finger.

Belongs to the eukaryotic ribosomal protein eL43 family. Putative zinc-binding subfamily. Part of the 50S ribosomal subunit. Zn(2+) is required as a cofactor.

Functionally, binds to the 23S rRNA. The sequence is that of Large ribosomal subunit protein eL43 from Saccharolobus solfataricus (strain ATCC 35092 / DSM 1617 / JCM 11322 / P2) (Sulfolobus solfataricus).